The chain runs to 517 residues: E3 ubiquitin-protein ligase TRIM65 (517 aa).

Ala-2 is subject to N-acetylalanine. An RING-type zinc finger spans residues 12–51 (CAICLGLYQDPVTLPCGHNFCGACIRDWWDRCGKACPECR). The interval 75–94 (AGPARDPGPDPGPGPDPAAR) is disordered. A B box-type zinc finger spans residues 90–137 (DPAARCPRHGRPLELFCRTEGRCVCSVCTVRECRLHERALLDAERLKR). Cys-95, His-98, Cys-117, and His-125 together coordinate Zn(2+). A coiled-coil region spans residues 139-227 (AQLRASLEVT…QRLRVHLEAV (89 aa)). Ser-185 is subject to Phosphoserine. Lys-206 participates in a covalent cross-link: (Microbial infection) Glycyl lysine isopeptide (Lys-Gly) (interchain with G-Cter in ubiquitin). The region spanning 313 to 506 (APVPSTVCPL…LTLCHQPGAV (194 aa)) is the B30.2/SPRY domain.

The protein belongs to the TRIM/RBCC family. Homo-multimerizes. Interacts with ARRDC4.

It is found in the cytoplasm. It catalyses the reaction S-ubiquitinyl-[E2 ubiquitin-conjugating enzyme]-L-cysteine + [acceptor protein]-L-lysine = [E2 ubiquitin-conjugating enzyme]-L-cysteine + N(6)-ubiquitinyl-[acceptor protein]-L-lysine.. Its pathway is protein modification; protein ubiquitination. Its function is as follows. E3 ubiquitin ligase that plays a role in several processes including innate immnity, autophagy or inflammation. Negatively regulates miRNAs by modulating the ubiquitination and stability of TNRC6A, a protein involved in RNA-mediated gene silencing by both micro-RNAs (miRNAs) and short interfering RNAs. This ubiquitination results in the suppressed expression of miR-138-5p leading to increased autophagy. Upon enteroviral infection, promotes 'Lys-63'-mediated ubiquitination activation of IFIH1/MDA5 leading to innate signaling cascade. Mechanistically, selectively recognizes MDA5 filaments that occur on dsRNAs. Plays also a role in limitation of inflammation through different mechanisms. First, promotes 'Lys-48'-mediated ubiquitination of VCAM1 leading to its degradation and limitation of LPS-induced lung inflammation. In addition, negatively regulates inflammasome activation by promoting 'lys48'-linked ubiquitination of NLRP3 which is critical for the inhibition of NLRP3 inflammasome activation in resting macrophages. This chain is E3 ubiquitin-protein ligase TRIM65 (TRIM65), found in Homo sapiens (Human).